The following is a 362-amino-acid chain: Phosphoserine aminotransferase (362 aa).

2 residues coordinate L-glutamate: Ser9 and Arg42. Pyridoxal 5'-phosphate is bound by residues 76 to 77, Trp102, Thr153, Asp174, and Gln197; that span reads GR. Lys198 carries the N6-(pyridoxal phosphate)lysine modification. Pyridoxal 5'-phosphate is bound at residue 239-240; it reads NT.

The protein belongs to the class-V pyridoxal-phosphate-dependent aminotransferase family. SerC subfamily. Homodimer. The cofactor is pyridoxal 5'-phosphate.

The protein localises to the cytoplasm. It catalyses the reaction O-phospho-L-serine + 2-oxoglutarate = 3-phosphooxypyruvate + L-glutamate. The enzyme catalyses 4-(phosphooxy)-L-threonine + 2-oxoglutarate = (R)-3-hydroxy-2-oxo-4-phosphooxybutanoate + L-glutamate. Its pathway is amino-acid biosynthesis; L-serine biosynthesis; L-serine from 3-phospho-D-glycerate: step 2/3. It participates in cofactor biosynthesis; pyridoxine 5'-phosphate biosynthesis; pyridoxine 5'-phosphate from D-erythrose 4-phosphate: step 3/5. Catalyzes the reversible conversion of 3-phosphohydroxypyruvate to phosphoserine and of 3-hydroxy-2-oxo-4-phosphonooxybutanoate to phosphohydroxythreonine. In Enterobacter sp. (strain 638), this protein is Phosphoserine aminotransferase.